Reading from the N-terminus, the 516-residue chain is Methionine--tRNA ligase (516 aa).

The 'HIGH' region signature appears at 13-23; that stretch reads FYPNGKPHIGH. The 'KMSKS' region signature appears at 299-303; it reads KMSKS. Lys-302 is a binding site for ATP.

The protein belongs to the class-I aminoacyl-tRNA synthetase family. MetG type 2B subfamily. As to quaternary structure, monomer.

The protein resides in the cytoplasm. The enzyme catalyses tRNA(Met) + L-methionine + ATP = L-methionyl-tRNA(Met) + AMP + diphosphate. Functionally, is required not only for elongation of protein synthesis but also for the initiation of all mRNA translation through initiator tRNA(fMet) aminoacylation. This is Methionine--tRNA ligase from Mesorhizobium japonicum (strain LMG 29417 / CECT 9101 / MAFF 303099) (Mesorhizobium loti (strain MAFF 303099)).